The sequence spans 1657 residues: Putative serine/threonine-protein kinase/receptor R826 (1657 aa).

The N-terminal stretch at 1-23 (MRLNSQIVFCIVVVISCLSMIEC) is a signal peptide. N-linked (GlcNAc...) asparagine; by host glycans are attached at residues asparagine 153, asparagine 178, asparagine 238, asparagine 255, asparagine 352, asparagine 454, asparagine 476, asparagine 494, and asparagine 596. Residues 742 to 762 (IILAVVIPIAFIIVCIICILV) traverse the membrane as a helical segment. Residues 786–1049 (LELGEQLGTG…EIMTRLSNLM (264 aa)) form the Protein kinase 1 domain. ATP is bound by residues 792 to 800 (LGTGAFGEV) and lysine 813. The active-site Proton acceptor is the aspartate 909. A disordered region spans residues 1089–1115 (VQNSYNRTDSYDLGSNNSHSSITSDTN). Positions 1134-1277 (VVVFTDIISA…PTVTTAAAVT (144 aa)) constitute a Guanylate cyclase domain. One can recognise a Protein kinase 2 domain in the interval 1399 to 1651 (IKMGEQIGLG…DDVIIVLAKF (253 aa)). Residues 1405 to 1413 (IGLGSYGVV) and lysine 1426 contribute to the ATP site. Aspartate 1522 (proton acceptor) is an active-site residue.

The protein resides in the membrane. The enzyme catalyses L-seryl-[protein] + ATP = O-phospho-L-seryl-[protein] + ADP + H(+). It catalyses the reaction L-threonyl-[protein] + ATP = O-phospho-L-threonyl-[protein] + ADP + H(+). The polypeptide is Putative serine/threonine-protein kinase/receptor R826 (Acanthamoeba polyphaga mimivirus (APMV)).